Here is a 72-residue protein sequence, read N- to C-terminus: Translation initiation factor IF-1 (72 aa).

The S1-like domain maps to 1 to 72 (MTKEDCIEMQ…SKGRIIFRSR (72 aa)).

The protein belongs to the IF-1 family. In terms of assembly, component of the 30S ribosomal translation pre-initiation complex which assembles on the 30S ribosome in the order IF-2 and IF-3, IF-1 and N-formylmethionyl-tRNA(fMet); mRNA recruitment can occur at any time during PIC assembly.

The protein resides in the cytoplasm. In terms of biological role, one of the essential components for the initiation of protein synthesis. Stabilizes the binding of IF-2 and IF-3 on the 30S subunit to which N-formylmethionyl-tRNA(fMet) subsequently binds. Helps modulate mRNA selection, yielding the 30S pre-initiation complex (PIC). Upon addition of the 50S ribosomal subunit IF-1, IF-2 and IF-3 are released leaving the mature 70S translation initiation complex. The polypeptide is Translation initiation factor IF-1 (Buchnera aphidicola subsp. Baizongia pistaciae (strain Bp)).